The chain runs to 188 residues: Large ribosomal subunit protein eL18 (188 aa).

A disordered region spans residues Gly153–Asn188. Composition is skewed to basic residues over residues Ser161–Gly171 and Arg178–Asn188.

Belongs to the eukaryotic ribosomal protein eL18 family. As to quaternary structure, component of the large ribosomal subunit.

It is found in the cytoplasm. The protein localises to the cytosol. It localises to the rough endoplasmic reticulum. Component of the large ribosomal subunit. The ribosome is a large ribonucleoprotein complex responsible for the synthesis of proteins in the cell. This chain is Large ribosomal subunit protein eL18 (rpl18), found in Ictalurus punctatus (Channel catfish).